We begin with the raw amino-acid sequence, 151 residues long: Putative superoxide dismutase [Cu-Zn] (151 aa).

Positions 43, 45, and 60 each coordinate Cu cation. Cysteine 54 and cysteine 144 are disulfide-bonded. Residues histidine 60, histidine 68, histidine 77, and aspartate 80 each coordinate Zn(2+). Histidine 118 serves as a coordination point for Cu cation.

It belongs to the Cu-Zn superoxide dismutase family. It depends on Cu cation as a cofactor. Zn(2+) is required as a cofactor.

The catalysed reaction is 2 superoxide + 2 H(+) = H2O2 + O2. Nonessential for normal virus replication. Could be either non-functional or with a low activity. In Lepidoptera (butterflies and moths), this protein is Putative superoxide dismutase [Cu-Zn] (SOD).